Consider the following 131-residue polypeptide: MSMSDPLSDLLTRIRNGQAAGKAEIIVPASKLKRAVCQVLKEEGYIAGFSDVTEQGKHNIRVELKYHNGAPVIDKIQRVSKPGCRRYRGRDELPKVMGGFGIAIVSTSKGVMSDRRARSVGEGGEVLCVVE.

Belongs to the universal ribosomal protein uS8 family. In terms of assembly, part of the 30S ribosomal subunit. Contacts proteins S5 and S12.

One of the primary rRNA binding proteins, it binds directly to 16S rRNA central domain where it helps coordinate assembly of the platform of the 30S subunit. The polypeptide is Small ribosomal subunit protein uS8 (Methylococcus capsulatus (strain ATCC 33009 / NCIMB 11132 / Bath)).